Reading from the N-terminus, the 258-residue chain is UDP-N-acetylenolpyruvoylglucosamine reductase (258 aa).

Arg-142 is an active-site residue. The Proton donor role is filled by Ser-184. The active site involves Glu-254.

This sequence belongs to the MurB family. The cofactor is FAD.

It is found in the cytoplasm. It catalyses the reaction UDP-N-acetyl-alpha-D-muramate + NADP(+) = UDP-N-acetyl-3-O-(1-carboxyvinyl)-alpha-D-glucosamine + NADPH + H(+). It functions in the pathway cell wall biogenesis; peptidoglycan biosynthesis. Functionally, cell wall formation. The chain is UDP-N-acetylenolpyruvoylglucosamine reductase from Campylobacter jejuni subsp. jejuni serotype O:2 (strain ATCC 700819 / NCTC 11168).